The chain runs to 353 residues: Basic membrane protein C (353 aa).

Residues 1–16 (MFKRFIFITLSLLVFA) form the signal peptide. The N-palmitoyl cysteine moiety is linked to residue C17. The S-diacylglycerol cysteine moiety is linked to residue C17.

Belongs to the BMP lipoprotein family. Monomer.

Its subcellular location is the cell inner membrane. May be part of an ABC-type nucleoside uptake system involved in the purine salvage pathway. This Borreliella burgdorferi (strain N40) (Borrelia burgdorferi) protein is Basic membrane protein C (bmpC).